A 171-amino-acid polypeptide reads, in one-letter code: MEKLPKKRVSKTKSQKLIHSLTTQKNRAFLKKISANEMLLELEKGAFKKNEAYFISDEEDKNYVLVPDNVISLLAENARKAFEARLRAELERDIITQAPIDFEDVREVSLQLLENLRQKDGNLPNINTLNFVKQIKKEHPNLFFNFDNMFKQPPFNENNFENFDNSDEENF.

It belongs to the UPF0763 family.

The polypeptide is UPF0763 protein HPP12_0677 (Helicobacter pylori (strain P12)).